Reading from the N-terminus, the 2216-residue chain is RNA-directed RNA polymerase L (2216 aa).

An endonuclease region spans residues 26-289 (KTSFLSQVNL…ETRTAMLDER (264 aa)). 3 residues coordinate Mn(2+): E51, D88, and E101. Residue K114 is part of the active site. The RdRp catalytic domain maps to 1167–1364 (LDMKCVVRLS…YLSSKFNKFV (198 aa)). D1323 contacts Mg(2+).

Belongs to the Bunyavirales RNA polymerase family. In terms of assembly, homomultimer; the oligomeric structure is essential for the polymerase activity. Interacts with nucleoprotein N. Interacts with protein Z; this interaction inhibits viral transcription and replication, Z partially blocks the product exit tunnel for the releasing nascent RNA product. It depends on Mn(2+) as a cofactor. Mg(2+) serves as cofactor.

Its subcellular location is the virion. It localises to the host cytoplasm. It catalyses the reaction RNA(n) + a ribonucleoside 5'-triphosphate = RNA(n+1) + diphosphate. Its function is as follows. RNA-dependent RNA polymerase, which is responsible for the replication and transcription of the viral RNA genome using antigenomic RNA as an intermediate. During transcription, synthesizes subgenomic RNAs and assures their capping by a cap-snatching mechanism, which involves the endonuclease activity cleaving the host capped pre-mRNAs. These short capped RNAs are then used as primers for viral transcription. The 3'-end of subgenomic mRNAs molecules are heterogeneous and not polyadenylated. The replicase function is to direct synthesis of antigenomic and genomic RNA which are encapsidated and non capped. As a consequence of the use of the same enzyme for both transcription and replication, these mechanisms need to be well coordinated. These processes may be regulated by proteins N and Z in a dose-dependent manner. Z protein inhibits the viral polymerase L und thus the viral transcription and RNA synthesis. This is RNA-directed RNA polymerase L from Bear Canyon mammarenavirus (isolate Mouse/United States/AV A0070039/2000) (BCNV).